The primary structure comprises 1069 residues: Calcium-transporting ATPase 10, plasma membrane-type (1069 aa).

Positions 1-29 (MSGQFNNSPRGEDKDVEAGTSSFTEYEDS) are disordered. Residue Ser2 is modified to N-acetylserine. Over 2 to 180 (SGQFNNSPRG…NTYPQKKGRS (179 aa)) the chain is Cytoplasmic. Positions 42 to 53 (ERLRRWRQAALV) are interaction with calmodulin. The chain crosses the membrane as a helical span at residues 181–201 (FWRFVWEASQDLTLIILIVAA). The Lumenal segment spans residues 202–219 (VASLALGIKTEGIEKGWY). A helical membrane pass occupies residues 220–240 (DGISIAFAVLLVIVVTATSDY). The Cytoplasmic segment spans residues 241 to 369 (RQSLQFQNLN…GGETPLQVRL (129 aa)). Residues 370–389 (NGVATFIGIVGLTVAGVVLF) form a helical membrane-spanning segment. At 390–426 (VLVVRYFTGHTKNEQGGPQFIGGKTKFEHVLDDLVEI) the chain is on the lumenal side. The chain crosses the membrane as a helical span at residues 427–444 (FTVAVTIVVVAVPEGLPL). Residues 445 to 844 (AVTLTLAYSM…RWGRSVYANI (400 aa)) are Cytoplasmic-facing. The active-site 4-aspartylphosphate intermediate is Asp482. 2 residues coordinate Mg(2+): Asp789 and Asp793. A helical membrane pass occupies residues 845–863 (QKFIQFQLTVNVAALVINV). Over 864-874 (VAAISAGEVPL) the chain is Lumenal. A helical transmembrane segment spans residues 875–895 (TAVQLLWVNLIMDTLGALALA). The Cytoplasmic segment spans residues 896–915 (TEPPTDHLMDRAPVGRREPL). A helical membrane pass occupies residues 916 to 938 (ITNIMWRNLFIQAMYQVTVLLIL). The Lumenal segment spans residues 939–951 (NFRGISILHLKSK). Residues 952–973 (PNAERVKNTVIFNAFVICQVFN) traverse the membrane as a helical segment. At 974–991 (EFNARKPDEINIFRGVLR) the chain is on the cytoplasmic side. A helical membrane pass occupies residues 992–1013 (NHLFVGIISITIVLQVVIVEFL). Over 1014-1023 (GTFASTTKLD) the chain is Lumenal. Residues 1024–1045 (WEMWLVCIGIGSISWPLAVIGK) form a helical membrane-spanning segment. Topologically, residues 1046-1069 (LIPVPETPVSQYFRINRWRRNSSG) are cytoplasmic.

It belongs to the cation transport ATPase (P-type) (TC 3.A.3) family. Type IIB subfamily.

It is found in the membrane. The enzyme catalyses Ca(2+)(in) + ATP + H2O = Ca(2+)(out) + ADP + phosphate + H(+). Its activity is regulated as follows. Activated by calmodulin. In terms of biological role, this magnesium-dependent enzyme catalyzes the hydrolysis of ATP coupled with the translocation of calcium from the cytosol into the endoplasmic reticulum. The polypeptide is Calcium-transporting ATPase 10, plasma membrane-type (ACA10) (Arabidopsis thaliana (Mouse-ear cress)).